We begin with the raw amino-acid sequence, 590 residues long: MIPSDFIDELLAKTDIVDIIDEQVPLKKGGANYMACCPFHKEKTPSFSVSPTKQFYHCFSCGAHGSAIGFVMEHQGLSFPEAVQFLADRVGMVVPKVHGQNDNPEVRAERKKKQQTLEETTAAAADFYAQQLKFNPAAKAYLDKRGLSAEVIAHYGLGYAPDGWQPLTQVFQPYPNTALVDTGMVIDNEGRHYDRFRHRIMFPIRNPRGQVIGFGGRVLDDSKPKYLNSPDTPLFDKGKNLYGLYEGRAAVKEAGRILVVEGYMDVVALAQFGVGYGVAALGTATTAEHVKILMRQADSIYFCFDGDSAGRKAAWRALENALPQLKDDKSLHFLFLPEEHDPDSYIRAYGKAQFEDALLNQSKPLSEYFWEHLSDGIHLNTQEGKAELVKTSSPLLAQITAPALAYLLKQRLSELVGIDPDNLAQLLGQEAPKRHVKQKNYKLPPISVKQPVMPTLVQRQIRSLLINPDWAAYIDLPDYLALDGDFACLANLAETIKNHPSVPATAQVLEHMRGSPYEETINRIFRSALQSEEMEGGGEEDCENFQIGIKKLLNELKYSQIEALKQKSLQSGLNESEKKLLLSLLTAKQN.

A CHC2-type zinc finger spans residues cysteine 37–cysteine 61. In terms of domain architecture, Toprim spans glycine 255–proline 337. Mg(2+) contacts are provided by glutamate 261, aspartate 305, and aspartate 307.

This sequence belongs to the DnaG primase family. As to quaternary structure, monomer. Interacts with DnaB. Requires Zn(2+) as cofactor. It depends on Mg(2+) as a cofactor.

The catalysed reaction is ssDNA + n NTP = ssDNA/pppN(pN)n-1 hybrid + (n-1) diphosphate.. In terms of biological role, RNA polymerase that catalyzes the synthesis of short RNA molecules used as primers for DNA polymerase during DNA replication. The chain is DNA primase from Neisseria meningitidis serogroup A / serotype 4A (strain DSM 15465 / Z2491).